The chain runs to 502 residues: GTPase Obg (502 aa).

Positions 2–159 (NRFIDRVVLH…HDLILELKSM (158 aa)) constitute an Obg domain. Residues 160–341 (ADVGLVGFPS…LKYKLLEIVQ (182 aa)) form the OBG-type G domain. GTP-binding positions include 166-173 (GFPSAGKS), 191-195 (FTTLQ), 212-215 (DVPG), 292-295 (NKAD), and 322-324 (SAV). Mg(2+)-binding residues include Ser-173 and Thr-193. Positions 364-444 (DGRRRREEFE…IGGVTFEWEP (81 aa)) constitute an OCT domain.

The protein belongs to the TRAFAC class OBG-HflX-like GTPase superfamily. OBG GTPase family. As to quaternary structure, monomer. It depends on Mg(2+) as a cofactor.

The protein localises to the cytoplasm. Functionally, an essential GTPase which binds GTP, GDP and possibly (p)ppGpp with moderate affinity, with high nucleotide exchange rates and a fairly low GTP hydrolysis rate. Plays a role in control of the cell cycle, stress response, ribosome biogenesis and in those bacteria that undergo differentiation, in morphogenesis control. The polypeptide is GTPase Obg (Corynebacterium efficiens (strain DSM 44549 / YS-314 / AJ 12310 / JCM 11189 / NBRC 100395)).